Reading from the N-terminus, the 712-residue chain is Polyribonucleotide nucleotidyltransferase (712 aa).

2 residues coordinate Mg(2+): aspartate 487 and aspartate 493. The KH domain occupies 554–613 (PKIITMTINPDKIRDVIGPSGKQINKIIEETGVKIDIEQDGTVFISSINQEMNDKAKKII). Positions 623–691 (GEIYEGKVKR…KQGRVNLSRK (69 aa)) constitute an S1 motif domain.

Belongs to the polyribonucleotide nucleotidyltransferase family. It depends on Mg(2+) as a cofactor.

Its subcellular location is the cytoplasm. It catalyses the reaction RNA(n+1) + phosphate = RNA(n) + a ribonucleoside 5'-diphosphate. Functionally, involved in mRNA degradation. Catalyzes the phosphorolysis of single-stranded polyribonucleotides processively in the 3'- to 5'-direction. The polypeptide is Polyribonucleotide nucleotidyltransferase (Bacillus cereus (strain ATCC 10987 / NRS 248)).